Reading from the N-terminus, the 494-residue chain is MSSDDEINMDDSDSSQGEIDDGCMSDDDGIVLESREQNSSDYKDNGEPDNEVLNHDSLEAEMKKTITDVQAVLQVKTGVCRILLHKYKWNKESLLERFYEHPDTTTFLIDAHVIPRRQERLPAGDAECDICCSLGELSGLSCNHRACTQCWKAYLTNKIANNAQSEIECMAPNCKLLIEDEKVMFYITDPTVIATYRKLIVASYVETNRLLKWCPGIDCGKAVRVSHWEPRLVVCSCGSRFCFSCGHDWHEPVNCRLLKLWLKKCNDDSETSNWINANTKECPKCMITIEKDGGCNHMTCKNTACRFEFCWMCLGPWEPHGSSWYSCNRFDDSAAKNARDAQEVSRANLQRYLFYYNRYMGHQQSLRLEGKLYATVKSKMEQMQTLSMSWIEVQFLRKAVDVLSECRRTLMFTYAFAFYLKRDNNAIIFESNQKDLEMETEQLSGFLERDLDNENLVTLKQKVQDKYRYVEHRRKVLLDHCSEGADQELWVFNE.

The span at 1 to 30 (MSSDDEINMDDSDSSQGEIDDGCMSDDDGI) shows a compositional bias: acidic residues. Residues 1 to 52 (MSSDDEINMDDSDSSQGEIDDGCMSDDDGIVLESREQNSSDYKDNGEPDNEV) are disordered. A compositionally biased stretch (basic and acidic residues) spans 33-52 (ESREQNSSDYKDNGEPDNEV). Residues 124 to 331 (GDAECDICCS…SSWYSCNRFD (208 aa)) are TRIAD supradomain. Residues C128, C131, C142, H144, C147, C150, C169, C174, C214, C219, C235, C237, C242, C245, H250, C255, C282, and C285 each contribute to the Zn(2+) site. The segment at 128–174 (CDICCSLGELSGLSCNHRACTQCWKAYLTNKIANNAQSEIECMAPNC) adopts an RING-type 1 zinc-finger fold. An IBR-type zinc finger spans residues 194 to 255 (ATYRKLIVAS…GHDWHEPVNC (62 aa)). Residues 282-313 (CPKCMITIEKDGGCNHMTCKNTACRFEFCWMC) form an RING-type 2; atypical zinc finger. C295 is a catalytic residue. The Zn(2+) site is built by C300, C305, C310, C313, H320, and C327. Residues 346–494 (RANLQRYLFY…ADQELWVFNE (149 aa)) form an ariadne domain region.

Belongs to the RBR family. Ariadne subfamily. In terms of assembly, interacts with ubiquitin-conjugating enzyme E2 ubc-18.

It is found in the nucleus. Its subcellular location is the cytoplasm. It carries out the reaction [E2 ubiquitin-conjugating enzyme]-S-ubiquitinyl-L-cysteine + [acceptor protein]-L-lysine = [E2 ubiquitin-conjugating enzyme]-L-cysteine + [acceptor protein]-N(6)-ubiquitinyl-L-lysine.. Autoinhibited by the ariadne domain, which masks the second RING-type zinc finger that contains the active site and inhibits the E3 activity. E3 ubiquitin-protein transferase, which catalyzes ubiquitination of target proteins together with ubiquitin-conjugating enzyme E2 ubc-18. Acts with ubc-18 to regulate pharyngeal development. This chain is E3 ubiquitin-protein ligase ari-1.1, found in Caenorhabditis elegans.